We begin with the raw amino-acid sequence, 124 residues long: Small ribosomal subunit protein uS12c (124 aa).

The protein belongs to the universal ribosomal protein uS12 family. As to quaternary structure, part of the 30S ribosomal subunit.

It is found in the plastid. The protein localises to the chloroplast. In terms of biological role, with S4 and S5 plays an important role in translational accuracy. Located at the interface of the 30S and 50S subunits. This Ostreococcus tauri protein is Small ribosomal subunit protein uS12c (rps12).